Reading from the N-terminus, the 543-residue chain is MVVIRAPLKELEGRYGREIVDLILRYSSIIGYSVDHDEELKIEFNPDRPDLFSFPTLMKQIKIFFYGEVEIRKPQIRDDAVKVTVSKGVRDIRPYFSALIAEGSSIGVHFDELINYQEILHASIGKDRSKMAIGIHDLEKTGDSIHYTTVSRNQRMQTYDGMEGTVDWIIKNHEKGIAYGRLLPGTGRSVAITDNEGNILSLPPIVNSYRSRIDEGTKKFFVDITGTDLNSVKFAHHLMSNFFSSLKYRIRTPSIDGLPSRETEIIRAFDFRIMRPARRSIERYLGEKMDSEETITHLRRMGYVAEPGYPEIAVYVPGYRVDVMGEADIIEDILKSKGIENIEEKQIFIGKFGEPLFMNKVKDLARDTMIGLGFQEVMTFVLSPASYLQEYTGGVRIQNPKSEDYSVIRDKIYPDLLDLIARNKKHSLPQRIFEIGDKIVGGKQRTALSCVIADTRSEFSTAKSYMQGFLARFTSENPVIVPQMIYGSIDGRSGSIKIGEKIIGVIGEIHPAFLERFSLAVPVSFFEIDLDEIFIANMDHLGL.

Residues 269–344 form the B5 domain; it reads FDFRIMRPAR…KSKGIENIEE (76 aa). Mg(2+) contacts are provided by aspartate 322, aspartate 328, glutamate 331, and aspartate 332.

This sequence belongs to the phenylalanyl-tRNA synthetase beta subunit family. Type 2 subfamily. As to quaternary structure, tetramer of two alpha and two beta subunits. It depends on Mg(2+) as a cofactor.

It is found in the cytoplasm. The enzyme catalyses tRNA(Phe) + L-phenylalanine + ATP = L-phenylalanyl-tRNA(Phe) + AMP + diphosphate + H(+). The polypeptide is Phenylalanine--tRNA ligase beta subunit (Thermoplasma acidophilum (strain ATCC 25905 / DSM 1728 / JCM 9062 / NBRC 15155 / AMRC-C165)).